We begin with the raw amino-acid sequence, 340 residues long: Selenide, water dikinase (340 aa).

Residue Cys13 is part of the active site. Residues Lys16 and 43 to 45 (ASD) contribute to the ATP site. Asp46 lines the Mg(2+) pocket. Residues Asp63, Asp86, and 133-135 (GHS) each bind ATP. Residue Asp86 coordinates Mg(2+). A Mg(2+)-binding site is contributed by Asp221.

Belongs to the selenophosphate synthase 1 family. Class I subfamily. In terms of assembly, homodimer. Mg(2+) serves as cofactor.

The enzyme catalyses hydrogenselenide + ATP + H2O = selenophosphate + AMP + phosphate + 2 H(+). Synthesizes selenophosphate from selenide and ATP. This Desulfitobacterium hafniense (strain Y51) protein is Selenide, water dikinase.